A 386-amino-acid polypeptide reads, in one-letter code: 3-ketoacyl-CoA thiolase (386 aa).

Cysteine 91 acts as the Acyl-thioester intermediate in catalysis. Active-site proton acceptor residues include histidine 342 and cysteine 372.

The protein belongs to the thiolase-like superfamily. Thiolase family. Heterotetramer of two alpha chains (FadB) and two beta chains (FadA).

The protein localises to the cytoplasm. It carries out the reaction an acyl-CoA + acetyl-CoA = a 3-oxoacyl-CoA + CoA. It participates in lipid metabolism; fatty acid beta-oxidation. In terms of biological role, catalyzes the final step of fatty acid oxidation in which acetyl-CoA is released and the CoA ester of a fatty acid two carbons shorter is formed. The protein is 3-ketoacyl-CoA thiolase of Pseudoalteromonas atlantica (strain T6c / ATCC BAA-1087).